A 405-amino-acid chain; its full sequence is L-carnitine CoA-transferase (405 aa).

Lysine 97 and arginine 104 together coordinate CoA. The Nucleophile role is filled by aspartate 169.

It belongs to the CoA-transferase III family. CaiB subfamily. As to quaternary structure, homodimer.

It is found in the cytoplasm. The catalysed reaction is crotonobetainyl-CoA + (R)-carnitine = crotonobetaine + (R)-carnitinyl-CoA. The enzyme catalyses 4-(trimethylamino)butanoyl-CoA + (R)-carnitine = (R)-carnitinyl-CoA + 4-(trimethylamino)butanoate. It participates in amine and polyamine metabolism; carnitine metabolism. Catalyzes the reversible transfer of the CoA moiety from gamma-butyrobetainyl-CoA to L-carnitine to generate L-carnitinyl-CoA and gamma-butyrobetaine. Is also able to catalyze the reversible transfer of the CoA moiety from gamma-butyrobetainyl-CoA or L-carnitinyl-CoA to crotonobetaine to generate crotonobetainyl-CoA. The protein is L-carnitine CoA-transferase of Shigella flexneri serotype 5b (strain 8401).